Here is a 758-residue protein sequence, read N- to C-terminus: 5-methyltetrahydropteroyltriglutamate--homocysteine methyltransferase (758 aa).

5-methyltetrahydropteroyltri-L-glutamate-binding positions include 16–19 (RELK) and K116. L-homocysteine is bound by residues 436-438 (IGS) and E489. L-methionine is bound by residues 436–438 (IGS) and E489. 5-methyltetrahydropteroyltri-L-glutamate is bound by residues 520–521 (RC) and W566. An L-homocysteine-binding site is contributed by D604. An L-methionine-binding site is contributed by D604. Position 610 (E610) interacts with 5-methyltetrahydropteroyltri-L-glutamate. Zn(2+)-binding residues include H646, C648, and E670. The Proton donor role is filled by H699. Residue C731 coordinates Zn(2+).

The protein belongs to the vitamin-B12 independent methionine synthase family. Zn(2+) serves as cofactor.

It carries out the reaction 5-methyltetrahydropteroyltri-L-glutamate + L-homocysteine = tetrahydropteroyltri-L-glutamate + L-methionine. It functions in the pathway amino-acid biosynthesis; L-methionine biosynthesis via de novo pathway; L-methionine from L-homocysteine (MetE route): step 1/1. Catalyzes the transfer of a methyl group from 5-methyltetrahydrofolate to homocysteine resulting in methionine formation. The protein is 5-methyltetrahydropteroyltriglutamate--homocysteine methyltransferase of Xylella fastidiosa (strain M12).